A 445-amino-acid polypeptide reads, in one-letter code: C-type lectin domain family 4 member M (445 aa).

The Cytoplasmic portion of the chain corresponds to 1–49; it reads MSDSKEPRVQQLGLLEEDPTTSGIRLFPRDFQFQQIHGHKSSTGCLGHG. The Endocytosis signal motif lies at 14–15; that stretch reads LL. The chain crosses the membrane as a helical; Signal-anchor for type II membrane protein span at residues 50–70; it reads PLVLQLLSFTLLAGVLVAILV. Over 71–445 the chain is Extracellular; the sequence is QVSKVPSSLS…KKPAVCFRDE (375 aa). A glycan (N-linked (GlcNAc...) asparagine) is linked at Asn-92. 9 repeat units span residues 108–130, 131–151, 154–176, 177–199, 200–222, 223–245, 246–268, 269–291, and 292–314. Positions 108 to 315 are 9 X approximate tandem repeats; sequence KLQEIYQELT…AFERLCRHCP (208 aa). Cystine bridges form between Cys-311/Cys-441, Cys-314/Cys-325, Cys-342/Cys-435, and Cys-414/Cys-427. In terms of domain architecture, C-type lectin spans 320–436; that stretch reads FFQGNCYFMS…CDIDNYWICK (117 aa). Residues Glu-405, Asn-407, Ser-409, Glu-412, Asn-423, and Asp-424 each contribute to the Ca(2+) site. N-linked (GlcNAc...) asparagine glycosylation occurs at Asn-407.

In terms of assembly, homotetramer.

It is found in the membrane. Functionally, probable pathogen-recognition receptor involved in peripheral immune surveillance in liver. May mediate the endocytosis of pathogens which are subsequently degraded in lysosomal compartments. Probably recognizes in a calcium-dependent manner high mannose N-linked oligosaccharides in a variety of pathogen antigens. Is a receptor for ICAM3, probably by binding to mannose-like carbohydrates. The sequence is that of C-type lectin domain family 4 member M (CLEC4M) from Pan troglodytes (Chimpanzee).